Reading from the N-terminus, the 148-residue chain is Large ribosomal subunit protein bL9 (148 aa).

The protein belongs to the bacterial ribosomal protein bL9 family.

Its function is as follows. Binds to the 23S rRNA. The polypeptide is Large ribosomal subunit protein bL9 (Pseudomonas putida (strain W619)).